We begin with the raw amino-acid sequence, 345 residues long: Dihydroorotase (345 aa).

2 residues coordinate Zn(2+): His13 and His15. Substrate contacts are provided by residues 15–17 (HFR) and Asn41. Positions 98, 135, and 173 each coordinate Zn(2+). N6-carboxylysine is present on Lys98. His135 serves as a coordination point for substrate. Leu218 provides a ligand contact to substrate. Asp246 is a Zn(2+) binding site. The active site involves Asp246. The substrate site is built by His250 and Ala262.

This sequence belongs to the metallo-dependent hydrolases superfamily. DHOase family. Class II DHOase subfamily. As to quaternary structure, homodimer. It depends on Zn(2+) as a cofactor.

The enzyme catalyses (S)-dihydroorotate + H2O = N-carbamoyl-L-aspartate + H(+). It functions in the pathway pyrimidine metabolism; UMP biosynthesis via de novo pathway; (S)-dihydroorotate from bicarbonate: step 3/3. Its function is as follows. Catalyzes the reversible cyclization of carbamoyl aspartate to dihydroorotate. This chain is Dihydroorotase, found in Shewanella frigidimarina (strain NCIMB 400).